Here is a 326-residue protein sequence, read N- to C-terminus: DNA-directed RNA polymerase subunit alpha (326 aa).

The alpha N-terminal domain (alpha-NTD) stretch occupies residues Met-1 to Glu-232. The tract at residues Val-246–Pro-326 is alpha C-terminal domain (alpha-CTD).

Belongs to the RNA polymerase alpha chain family. In terms of assembly, homodimer. The RNAP catalytic core consists of 2 alpha, 1 beta, 1 beta' and 1 omega subunit. When a sigma factor is associated with the core the holoenzyme is formed, which can initiate transcription.

It catalyses the reaction RNA(n) + a ribonucleoside 5'-triphosphate = RNA(n+1) + diphosphate. DNA-dependent RNA polymerase catalyzes the transcription of DNA into RNA using the four ribonucleoside triphosphates as substrates. This Thiobacillus denitrificans (strain ATCC 25259 / T1) protein is DNA-directed RNA polymerase subunit alpha.